The following is a 96-amino-acid chain: MKCFAQIVVLLLVIAFSHGAVITGVCDRDAQCGSGTCCAASAFSRNIRFCVPLGNNGEECHPASHKVPYNGKRLSSLCPCNTGLTCSKSGEKFQCS.

An N-terminal signal peptide occupies residues 1–19 (MKCFAQIVVLLLVIAFSHG). 5 disulfides stabilise this stretch: Cys26–Cys38, Cys32–Cys50, Cys37–Cys78, Cys60–Cys86, and Cys80–Cys95.

Belongs to the AVIT (prokineticin) family. Expressed by the skin glands.

It localises to the secreted. Functionally, potent agonist for both PKR1/PROKR1 and PKR2/PROKR2, and inducer of a potent and long-lasting hyperalgesia. Also potentiates capsaicin-induced TRPV1 current, when tested on DRG neurons. At subnanomolar concentrations, this protein both induces potent chemotaxis of macrophages and stimulates LPS-induced production of the pro-inflammatory cytokines IL-1 and IL-12. In vivo, potently stimulates the contraction of the guinea-pig gastrointestinal (GI) smooth muscle (nanomolar concentration). In Bombina maxima (Giant fire-bellied toad), this protein is Prokineticin Bm8-a.